A 521-amino-acid polypeptide reads, in one-letter code: Protein nucleotidyltransferase YdiU (521 aa).

Residues Gly109, Gly111, Arg112, Lys131, Asp143, Gly144, Arg194, and Arg201 each coordinate ATP. Residue Asp270 is the Proton acceptor of the active site. Asn271 and Asp280 together coordinate Mg(2+). Residue Asp280 participates in ATP binding.

This sequence belongs to the SELO family. Mg(2+) is required as a cofactor. Requires Mn(2+) as cofactor.

The catalysed reaction is L-seryl-[protein] + ATP = 3-O-(5'-adenylyl)-L-seryl-[protein] + diphosphate. It catalyses the reaction L-threonyl-[protein] + ATP = 3-O-(5'-adenylyl)-L-threonyl-[protein] + diphosphate. The enzyme catalyses L-tyrosyl-[protein] + ATP = O-(5'-adenylyl)-L-tyrosyl-[protein] + diphosphate. It carries out the reaction L-histidyl-[protein] + UTP = N(tele)-(5'-uridylyl)-L-histidyl-[protein] + diphosphate. The catalysed reaction is L-seryl-[protein] + UTP = O-(5'-uridylyl)-L-seryl-[protein] + diphosphate. It catalyses the reaction L-tyrosyl-[protein] + UTP = O-(5'-uridylyl)-L-tyrosyl-[protein] + diphosphate. Nucleotidyltransferase involved in the post-translational modification of proteins. It can catalyze the addition of adenosine monophosphate (AMP) or uridine monophosphate (UMP) to a protein, resulting in modifications known as AMPylation and UMPylation. The chain is Protein nucleotidyltransferase YdiU from Burkholderia thailandensis (strain ATCC 700388 / DSM 13276 / CCUG 48851 / CIP 106301 / E264).